A 599-amino-acid chain; its full sequence is Pentatricopeptide repeat-containing protein At3g62540, mitochondrial (599 aa).

A mitochondrion-targeting transit peptide spans 1 to 99 (MAAAPWLYLS…RGFSSGSSNV (99 aa)). PPR repeat units lie at residues 194–228 (ASRT…GLLT), 230–262 (ETFT…KFKI), 263–293 (GVET…LKER), 297–331 (NMMT…GLKP), 332–366 (DIVA…GPCP), 367–401 (NVRS…GLQP), 402–436 (DAAV…GHPP), 437–471 (DGKT…EIEP), 472–506 (SIHT…GICP), and 507–541 (DDNS…GMKT).

This sequence belongs to the PPR family. P subfamily.

The protein resides in the mitochondrion. This chain is Pentatricopeptide repeat-containing protein At3g62540, mitochondrial, found in Arabidopsis thaliana (Mouse-ear cress).